Reading from the N-terminus, the 86-residue chain is DNA-directed RNA polymerase subunit omega (86 aa).

It belongs to the RNA polymerase subunit omega family. In terms of assembly, the RNAP catalytic core consists of 2 alpha, 1 beta, 1 beta' and 1 omega subunit. When a sigma factor is associated with the core the holoenzyme is formed, which can initiate transcription.

The catalysed reaction is RNA(n) + a ribonucleoside 5'-triphosphate = RNA(n+1) + diphosphate. In terms of biological role, promotes RNA polymerase assembly. Latches the N- and C-terminal regions of the beta' subunit thereby facilitating its interaction with the beta and alpha subunits. This is DNA-directed RNA polymerase subunit omega from Psychrobacter arcticus (strain DSM 17307 / VKM B-2377 / 273-4).